We begin with the raw amino-acid sequence, 259 residues long: Protein N-terminal and lysine N-methyltransferase efm7 (259 aa).

S-adenosyl-L-methionine contacts are provided by residues W53, 80–82, D102, W138, and A164; that span reads GAA.

The protein belongs to the class I-like SAM-binding methyltransferase superfamily. EFM7 family.

It localises to the cytoplasm. Functionally, S-adenosyl-L-methionine-dependent protein methyltransferase that trimethylates the N-terminal glycine 'Gly-2' of elongation factor 1-alpha, before also catalyzing the mono- and dimethylation of 'Lys-3'. In Emericella nidulans (strain FGSC A4 / ATCC 38163 / CBS 112.46 / NRRL 194 / M139) (Aspergillus nidulans), this protein is Protein N-terminal and lysine N-methyltransferase efm7.